Here is a 307-residue protein sequence, read N- to C-terminus: Glycine--tRNA ligase alpha subunit (307 aa).

It belongs to the class-II aminoacyl-tRNA synthetase family. Tetramer of two alpha and two beta subunits.

Its subcellular location is the cytoplasm. It carries out the reaction tRNA(Gly) + glycine + ATP = glycyl-tRNA(Gly) + AMP + diphosphate. This chain is Glycine--tRNA ligase alpha subunit, found in Levilactobacillus brevis (strain ATCC 367 / BCRC 12310 / CIP 105137 / JCM 1170 / LMG 11437 / NCIMB 947 / NCTC 947) (Lactobacillus brevis).